The sequence spans 375 residues: Chaperone protein DnaJ (375 aa).

The 66-residue stretch at 5 to 70 (DYYEVLGVNR…RKRASYDQFG (66 aa)) folds into the J domain. The segment at 133–211 (GLSRTIKVPT…CHGQGRQQQT (79 aa)) adopts a CR-type zinc-finger fold. Cys-146, Cys-149, Cys-163, Cys-166, Cys-185, Cys-188, Cys-199, and Cys-202 together coordinate Zn(2+). CXXCXGXG motif repeat units lie at residues 146 to 153 (CKTCNGSG), 163 to 170 (CPRCNGSG), 185 to 192 (CSVCRGRG), and 199 to 206 (CTDCHGQG).

This sequence belongs to the DnaJ family. As to quaternary structure, homodimer. The cofactor is Zn(2+).

The protein localises to the cytoplasm. Functionally, participates actively in the response to hyperosmotic and heat shock by preventing the aggregation of stress-denatured proteins and by disaggregating proteins, also in an autonomous, DnaK-independent fashion. Unfolded proteins bind initially to DnaJ; upon interaction with the DnaJ-bound protein, DnaK hydrolyzes its bound ATP, resulting in the formation of a stable complex. GrpE releases ADP from DnaK; ATP binding to DnaK triggers the release of the substrate protein, thus completing the reaction cycle. Several rounds of ATP-dependent interactions between DnaJ, DnaK and GrpE are required for fully efficient folding. Also involved, together with DnaK and GrpE, in the DNA replication of plasmids through activation of initiation proteins. This is Chaperone protein DnaJ from Coxiella burnetii (strain CbuK_Q154) (Coxiella burnetii (strain Q154)).